Here is a 313-residue protein sequence, read N- to C-terminus: Aspartate carbamoyltransferase catalytic subunit (313 aa).

Arginine 59 and threonine 60 together coordinate carbamoyl phosphate. Lysine 87 provides a ligand contact to L-aspartate. 3 residues coordinate carbamoyl phosphate: arginine 109, histidine 137, and glutamine 140. The L-aspartate site is built by arginine 170 and arginine 224. 2 residues coordinate carbamoyl phosphate: glycine 265 and proline 266.

The protein belongs to the aspartate/ornithine carbamoyltransferase superfamily. ATCase family. In terms of assembly, heterododecamer (2C3:3R2) of six catalytic PyrB chains organized as two trimers (C3), and six regulatory PyrI chains organized as three dimers (R2).

The catalysed reaction is carbamoyl phosphate + L-aspartate = N-carbamoyl-L-aspartate + phosphate + H(+). It functions in the pathway pyrimidine metabolism; UMP biosynthesis via de novo pathway; (S)-dihydroorotate from bicarbonate: step 2/3. In terms of biological role, catalyzes the condensation of carbamoyl phosphate and aspartate to form carbamoyl aspartate and inorganic phosphate, the committed step in the de novo pyrimidine nucleotide biosynthesis pathway. This chain is Aspartate carbamoyltransferase catalytic subunit, found in Agrobacterium fabrum (strain C58 / ATCC 33970) (Agrobacterium tumefaciens (strain C58)).